The primary structure comprises 311 residues: Cytochrome f (311 aa).

Residues 1 to 27 (MKHFFKSLTLAIALAASVLFWSPQAQA) form the signal peptide. Positions 28, 48, 51, and 52 each coordinate heme. Residues 279 to 296 (WLLVFFAAITLSQILLVL) form a helical membrane-spanning segment.

This sequence belongs to the cytochrome f family. The 4 large subunits of the cytochrome b6-f complex are cytochrome b6, subunit IV (17 kDa polypeptide, PetD), cytochrome f and the Rieske protein, while the 4 small subunits are PetG, PetL, PetM and PetN. The complex functions as a dimer. The cofactor is heme.

The protein localises to the cellular thylakoid membrane. Component of the cytochrome b6-f complex, which mediates electron transfer between photosystem II (PSII) and photosystem I (PSI), cyclic electron flow around PSI, and state transitions. This chain is Cytochrome f, found in Synechococcus elongatus.